The chain runs to 156 residues: Putative pre-16S rRNA nuclease (156 aa).

This sequence belongs to the YqgF nuclease family.

The protein localises to the cytoplasm. Could be a nuclease involved in processing of the 5'-end of pre-16S rRNA. This is Putative pre-16S rRNA nuclease from Rickettsia typhi (strain ATCC VR-144 / Wilmington).